We begin with the raw amino-acid sequence, 193 residues long: Holliday junction branch migration complex subunit RuvA (193 aa).

Positions 1 to 64 (MIGRIAGTLL…EDAHLLYGFL (64 aa)) are domain I. Positions 65-139 (TPQERSTFRE…GKLGADLGPL (75 aa)) are domain II. Residues 139–143 (LAGAA) are flexible linker. The tract at residues 144–193 (SPSDHAADILNALLALGYSEKEALAAIKNVPAGTGVSEGIKLSLKALSKA) is domain III.

It belongs to the RuvA family. As to quaternary structure, homotetramer. Forms an RuvA(8)-RuvB(12)-Holliday junction (HJ) complex. HJ DNA is sandwiched between 2 RuvA tetramers; dsDNA enters through RuvA and exits via RuvB. An RuvB hexamer assembles on each DNA strand where it exits the tetramer. Each RuvB hexamer is contacted by two RuvA subunits (via domain III) on 2 adjacent RuvB subunits; this complex drives branch migration. In the full resolvosome a probable DNA-RuvA(4)-RuvB(12)-RuvC(2) complex forms which resolves the HJ.

The protein localises to the cytoplasm. The RuvA-RuvB-RuvC complex processes Holliday junction (HJ) DNA during genetic recombination and DNA repair, while the RuvA-RuvB complex plays an important role in the rescue of blocked DNA replication forks via replication fork reversal (RFR). RuvA specifically binds to HJ cruciform DNA, conferring on it an open structure. The RuvB hexamer acts as an ATP-dependent pump, pulling dsDNA into and through the RuvAB complex. HJ branch migration allows RuvC to scan DNA until it finds its consensus sequence, where it cleaves and resolves the cruciform DNA. In Burkholderia thailandensis (strain ATCC 700388 / DSM 13276 / CCUG 48851 / CIP 106301 / E264), this protein is Holliday junction branch migration complex subunit RuvA.